Here is a 557-residue protein sequence, read N- to C-terminus: Potassium-transporting ATPase potassium-binding subunit (557 aa).

12 helical membrane passes run 5 to 25 (GFLL…PLGS), 63 to 83 (LCAI…MLLG), 132 to 152 (GLTV…FALI), 170 to 190 (LLRI…LFFI), 253 to 273 (FVQM…FGEV), 283 to 303 (LLWA…WAEV), 329 to 349 (VLVS…AVIA), 356 to 376 (ALGG…FGGV), 379 to 399 (GLYG…LMIG), 416 to 436 (LTAL…ALAM), 484 to 504 (LLAL…MAIA), and 526 to 546 (LFVG…FIPA).

The protein belongs to the KdpA family. As to quaternary structure, the system is composed of three essential subunits: KdpA, KdpB and KdpC.

Its subcellular location is the cell inner membrane. Its function is as follows. Part of the high-affinity ATP-driven potassium transport (or Kdp) system, which catalyzes the hydrolysis of ATP coupled with the electrogenic transport of potassium into the cytoplasm. This subunit binds the periplasmic potassium ions and delivers the ions to the membrane domain of KdpB through an intramembrane tunnel. The chain is Potassium-transporting ATPase potassium-binding subunit from Escherichia coli O81 (strain ED1a).